The chain runs to 450 residues: Signal recognition particle protein (450 aa).

Residues 107–114 (GLQGSGKT), 190–194 (DTAGR), and 248–251 (TKTD) contribute to the GTP site.

The protein belongs to the GTP-binding SRP family. SRP54 subfamily. In terms of assembly, part of the signal recognition particle protein translocation system, which is composed of SRP and FtsY. SRP is a ribonucleoprotein composed of Ffh and a 4.5S RNA molecule.

It is found in the cytoplasm. It catalyses the reaction GTP + H2O = GDP + phosphate + H(+). Involved in targeting and insertion of nascent membrane proteins into the cytoplasmic membrane. Binds to the hydrophobic signal sequence of the ribosome-nascent chain (RNC) as it emerges from the ribosomes. The SRP-RNC complex is then targeted to the cytoplasmic membrane where it interacts with the SRP receptor FtsY. Interaction with FtsY leads to the transfer of the RNC complex to the Sec translocase for insertion into the membrane, the hydrolysis of GTP by both Ffh and FtsY, and the dissociation of the SRP-FtsY complex into the individual components. In Buchnera aphidicola subsp. Baizongia pistaciae (strain Bp), this protein is Signal recognition particle protein.